A 318-amino-acid polypeptide reads, in one-letter code: MGNQEYHEPVLADATTSLLVTRPGIYIDGTLGGGGHSLELLRRLDALDGESLLVGIDQDSYALEAAGQKLQDFGDKAILLRGNFSMVRELLAPVKRGPGEGLEVMGLLLDLGVSSFQIDTPVRGFSYLRDGPLDMRMDPDGPLTAADIVNDYEEQALARLFFRYGEEAHGGRIARAVVSARSVAPITTTGGLAEVVRRACPRKDSPIKTLSRIYQALRIEVNDELGVLQQALEDGFAVLSPGGRFAVISYHSLEDRIVKRFFSARCTADWGPKGLPLREPLKPAEAELVTRKSVQAGEAEVSRNPRARSARLRVIQKL.

S-adenosyl-L-methionine is bound by residues 34-36, Asp-57, Leu-91, Asp-110, and Gln-117; that span reads GGH.

This sequence belongs to the methyltransferase superfamily. RsmH family.

The protein resides in the cytoplasm. The catalysed reaction is cytidine(1402) in 16S rRNA + S-adenosyl-L-methionine = N(4)-methylcytidine(1402) in 16S rRNA + S-adenosyl-L-homocysteine + H(+). In terms of biological role, specifically methylates the N4 position of cytidine in position 1402 (C1402) of 16S rRNA. The sequence is that of Ribosomal RNA small subunit methyltransferase H from Chlorobaculum parvum (strain DSM 263 / NCIMB 8327) (Chlorobium vibrioforme subsp. thiosulfatophilum).